A 298-amino-acid chain; its full sequence is 4-hydroxybenzoate octaprenyltransferase (298 aa).

7 consecutive transmembrane segments (helical) span residues 30–50, 54–74, 105–125, 148–168, 218–238, 240–260, and 275–295; these read IGTW…AEGI, GTLL…CVVN, VLFA…NLPT, FPQV…FMAI, DRLM…WVGL, LALG…FVFQ, and AFLN…LSLW.

This sequence belongs to the UbiA prenyltransferase family. It depends on Mg(2+) as a cofactor.

Its subcellular location is the cell inner membrane. The catalysed reaction is all-trans-octaprenyl diphosphate + 4-hydroxybenzoate = 4-hydroxy-3-(all-trans-octaprenyl)benzoate + diphosphate. Its pathway is cofactor biosynthesis; ubiquinone biosynthesis. In terms of biological role, catalyzes the prenylation of para-hydroxybenzoate (PHB) with an all-trans polyprenyl group. Mediates the second step in the final reaction sequence of ubiquinone-8 (UQ-8) biosynthesis, which is the condensation of the polyisoprenoid side chain with PHB, generating the first membrane-bound Q intermediate 3-octaprenyl-4-hydroxybenzoate. This is 4-hydroxybenzoate octaprenyltransferase from Chromohalobacter salexigens (strain ATCC BAA-138 / DSM 3043 / CIP 106854 / NCIMB 13768 / 1H11).